The sequence spans 529 residues: Polygalacturonase (529 aa).

Positions 1–21 (MNHRYTLLALAAAALSAGAHA) are cleaved as a signal peptide. Asp305 acts as the Proton donor in catalysis. His331 is a catalytic residue. The required for PGA export across the outer membrane and catalytic activity stretch occupies residues 516–529 (AFVPLKSVAPTSPI).

The protein belongs to the glycosyl hydrolase 28 family. As to quaternary structure, monomer.

The protein localises to the secreted. It carries out the reaction (1,4-alpha-D-galacturonosyl)n+m + H2O = (1,4-alpha-D-galacturonosyl)n + (1,4-alpha-D-galacturonosyl)m.. Contributes to the wilt disease production on tomato. The protein is Polygalacturonase (pglA) of Ralstonia solanacearum (Pseudomonas solanacearum).